The following is a 211-amino-acid chain: Pyridoxine/pyridoxamine 5'-phosphate oxidase (211 aa).

Substrate contacts are provided by residues 8-11 (RKNY) and K66. Residues 61–66 (RIVLLK), 76–77 (FT), K83, and Q105 each bind FMN. The substrate site is built by Y123, R127, and S131. Residues 140-141 (QS) and W184 contribute to the FMN site. 190–192 (RLH) lines the substrate pocket. R194 serves as a coordination point for FMN.

This sequence belongs to the pyridoxamine 5'-phosphate oxidase family. In terms of assembly, homodimer. FMN serves as cofactor.

It carries out the reaction pyridoxamine 5'-phosphate + O2 + H2O = pyridoxal 5'-phosphate + H2O2 + NH4(+). The catalysed reaction is pyridoxine 5'-phosphate + O2 = pyridoxal 5'-phosphate + H2O2. It functions in the pathway cofactor metabolism; pyridoxal 5'-phosphate salvage; pyridoxal 5'-phosphate from pyridoxamine 5'-phosphate: step 1/1. The protein operates within cofactor metabolism; pyridoxal 5'-phosphate salvage; pyridoxal 5'-phosphate from pyridoxine 5'-phosphate: step 1/1. Catalyzes the oxidation of either pyridoxine 5'-phosphate (PNP) or pyridoxamine 5'-phosphate (PMP) into pyridoxal 5'-phosphate (PLP). In Polynucleobacter asymbioticus (strain DSM 18221 / CIP 109841 / QLW-P1DMWA-1) (Polynucleobacter necessarius subsp. asymbioticus), this protein is Pyridoxine/pyridoxamine 5'-phosphate oxidase.